The primary structure comprises 202 residues: Imidazoleglycerol-phosphate dehydratase (202 aa).

Belongs to the imidazoleglycerol-phosphate dehydratase family.

The protein localises to the cytoplasm. The enzyme catalyses D-erythro-1-(imidazol-4-yl)glycerol 3-phosphate = 3-(imidazol-4-yl)-2-oxopropyl phosphate + H2O. The protein operates within amino-acid biosynthesis; L-histidine biosynthesis; L-histidine from 5-phospho-alpha-D-ribose 1-diphosphate: step 6/9. This chain is Imidazoleglycerol-phosphate dehydratase, found in Corynebacterium efficiens (strain DSM 44549 / YS-314 / AJ 12310 / JCM 11189 / NBRC 100395).